The chain runs to 287 residues: Phosphatidylserine decarboxylase proenzyme (287 aa).

Catalysis depends on charge relay system; for autoendoproteolytic cleavage activity residues Asp90, His147, and Ser253. Ser253 (schiff-base intermediate with substrate; via pyruvic acid; for decarboxylase activity) is an active-site residue. A Pyruvic acid (Ser); by autocatalysis modification is found at Ser253.

Belongs to the phosphatidylserine decarboxylase family. PSD-B subfamily. Prokaryotic type I sub-subfamily. Heterodimer of a large membrane-associated beta subunit and a small pyruvoyl-containing alpha subunit. Pyruvate serves as cofactor. Post-translationally, is synthesized initially as an inactive proenzyme. Formation of the active enzyme involves a self-maturation process in which the active site pyruvoyl group is generated from an internal serine residue via an autocatalytic post-translational modification. Two non-identical subunits are generated from the proenzyme in this reaction, and the pyruvate is formed at the N-terminus of the alpha chain, which is derived from the carboxyl end of the proenzyme. The autoendoproteolytic cleavage occurs by a canonical serine protease mechanism, in which the side chain hydroxyl group of the serine supplies its oxygen atom to form the C-terminus of the beta chain, while the remainder of the serine residue undergoes an oxidative deamination to produce ammonia and the pyruvoyl prosthetic group on the alpha chain. During this reaction, the Ser that is part of the protease active site of the proenzyme becomes the pyruvoyl prosthetic group, which constitutes an essential element of the active site of the mature decarboxylase.

The protein resides in the cell membrane. The enzyme catalyses a 1,2-diacyl-sn-glycero-3-phospho-L-serine + H(+) = a 1,2-diacyl-sn-glycero-3-phosphoethanolamine + CO2. It participates in phospholipid metabolism; phosphatidylethanolamine biosynthesis; phosphatidylethanolamine from CDP-diacylglycerol: step 2/2. Its function is as follows. Catalyzes the formation of phosphatidylethanolamine (PtdEtn) from phosphatidylserine (PtdSer). The sequence is that of Phosphatidylserine decarboxylase proenzyme from Aliivibrio fischeri (strain ATCC 700601 / ES114) (Vibrio fischeri).